Consider the following 157-residue polypeptide: Ubiquitin-like protein 4A (157 aa).

In terms of domain architecture, Ubiquitin-like spans 1 to 76; sequence MQLTVKALQG…LNLVVKPLEK (76 aa). Residue Lys-48 forms a Glycyl lysine isopeptide (Lys-Gly) (interchain with G-Cter in ubiquitin) linkage. Position 90 is a phosphoserine (Ser-90). Residues 96-138 form a required and sufficient for interaction with BAG6 region; it reads WQLISKVLARHFSAADASRVLEQLQRDYERSLSRLTLDDIERL.

In terms of assembly, component of the BAG6/BAT3 complex, at least composed of BAG6, UBL4A and GET4/TRC35. Interacts with BAG6; the interaction is direct and required for UBL4A protein stability. Interacts with USP13; may be indirect via BAG6. Polyubiquitinated. Ubiquitination by AMFR and deubiquitination by USP13 may regulate the interaction between the BAG6/BAT3 complex and SGTA and therefore may regulate client proteins fate.

Its subcellular location is the cytoplasm. It is found in the cytosol. It localises to the nucleus. Its function is as follows. As part of a cytosolic protein quality control complex, the BAG6/BAT3 complex, maintains misfolded and hydrophobic patches-containing proteins in a soluble state and participates in their proper delivery to the endoplasmic reticulum or alternatively can promote their sorting to the proteasome where they undergo degradation. The BAG6/BAT3 complex is involved in the post-translational delivery of tail-anchored/type II transmembrane proteins to the endoplasmic reticulum membrane. Recruited to ribosomes, it interacts with the transmembrane region of newly synthesized tail-anchored proteins and together with SGTA and ASNA1 mediates their delivery to the endoplasmic reticulum. Client proteins that cannot be properly delivered to the endoplasmic reticulum are ubiquitinated and sorted to the proteasome. Similarly, the BAG6/BAT3 complex also functions as a sorting platform for proteins of the secretory pathway that are mislocalized to the cytosol either delivering them to the proteasome for degradation or to the endoplasmic reticulum. The BAG6/BAT3 complex also plays a role in the endoplasmic reticulum-associated degradation (ERAD), a quality control mechanism that eliminates unwanted proteins of the endoplasmic reticulum through their retrotranslocation to the cytosol and their targeting to the proteasome. It maintains these retrotranslocated proteins in an unfolded yet soluble state condition in the cytosol to ensure their proper delivery to the proteasome. This chain is Ubiquitin-like protein 4A, found in Homo sapiens (Human).